The primary structure comprises 305 residues: Porphobilinogen deaminase (305 aa).

S-(dipyrrolylmethanemethyl)cysteine is present on Cys-238.

Belongs to the HMBS family. As to quaternary structure, monomer. The cofactor is dipyrromethane.

It catalyses the reaction 4 porphobilinogen + H2O = hydroxymethylbilane + 4 NH4(+). It functions in the pathway porphyrin-containing compound metabolism; protoporphyrin-IX biosynthesis; coproporphyrinogen-III from 5-aminolevulinate: step 2/4. Functionally, tetrapolymerization of the monopyrrole PBG into the hydroxymethylbilane pre-uroporphyrinogen in several discrete steps. In Rubrobacter xylanophilus (strain DSM 9941 / JCM 11954 / NBRC 16129 / PRD-1), this protein is Porphobilinogen deaminase.